Here is a 578-residue protein sequence, read N- to C-terminus: Polypeptide N-acetylgalactosaminyltransferase 4 (578 aa).

Over 1-12 (MAVRWTWAGKSC) the chain is Cytoplasmic. The helical; Signal-anchor for type II membrane protein transmembrane segment at 13 to 35 (LLLALLTLAYILVEFSVSTLYAS) threads the bilayer. Residues 36–578 (PGAGGARELG…DKNQLWRFEK (543 aa)) are Lumenal-facing. Cystine bridges form between Cys-124–Cys-357, Cys-348–Cys-421, Cys-457–Cys-477, Cys-503–Cys-518, and Cys-547–Cys-565. Residues 134 to 243 (LPTTSVIIAF…TGWLEPLLER (110 aa)) are catalytic subdomain A. The substrate site is built by Asp-175 and Arg-204. Positions 227 and 229 each coordinate Mn(2+). The segment at 303–365 (PIRSPTMAGG…PCSHVGHVFP (63 aa)) is catalytic subdomain B. Trp-334 contacts substrate. His-362 is a binding site for Mn(2+). Tyr-370 serves as a coordination point for substrate. The Ricin B-type lectin domain maps to 444-577 (WHGAIRSMGI…LDKNQLWRFE (134 aa)). N-linked (GlcNAc...) asparagine glycosylation is present at Asn-471.

Belongs to the glycosyltransferase 2 family. GalNAc-T subfamily. Requires Mn(2+) as cofactor. In terms of tissue distribution, highly expressed in sublingual gland, stomach, colon, small intestine and cervix. Expressed at intermediate levels in kidney, ovary, lung and uterus. Weakly expressed in spleen, liver, heart and brain. Not expressed in submandibular and parotid glands, skeletal muscle and testis.

The protein localises to the golgi apparatus membrane. It carries out the reaction L-seryl-[protein] + UDP-N-acetyl-alpha-D-galactosamine = a 3-O-[N-acetyl-alpha-D-galactosaminyl]-L-seryl-[protein] + UDP + H(+). It catalyses the reaction L-threonyl-[protein] + UDP-N-acetyl-alpha-D-galactosamine = a 3-O-[N-acetyl-alpha-D-galactosaminyl]-L-threonyl-[protein] + UDP + H(+). Its pathway is protein modification; protein glycosylation. In terms of biological role, catalyzes the initial reaction in O-linked oligosaccharide biosynthesis, the transfer of an N-acetyl-D-galactosamine residue to a serine or threonine residue on the protein receptor. Has a highest activity toward EA2 peptide substrate and a much lower activity with EPO-T, Muc2, Muc1a, Muc1b. The protein is Polypeptide N-acetylgalactosaminyltransferase 4 (Galnt4) of Mus musculus (Mouse).